A 70-amino-acid polypeptide reads, in one-letter code: Large ribosomal subunit protein eL38 (70 aa).

Belongs to the eukaryotic ribosomal protein eL38 family.

The chain is Large ribosomal subunit protein eL38 (RPL38) from Artemia franciscana (Brine shrimp).